Here is a 262-residue protein sequence, read N- to C-terminus: Nickel import ATP-binding protein NikD (262 aa).

Residues 6 to 249 (LAIEGLTATT…PGHEVTRMLV (244 aa)) enclose the ABC transporter domain. 42-49 (GASGSGKS) contributes to the ATP binding site.

Belongs to the ABC transporter superfamily. Nickel importer (TC 3.A.1.5.3) family. In terms of assembly, the complex is composed of two ATP-binding proteins (NikD and NikE), two transmembrane proteins (NikB and NikC) and a solute-binding protein (NikA).

The protein localises to the cell inner membrane. It carries out the reaction Ni(2+)(out) + ATP + H2O = Ni(2+)(in) + ADP + phosphate + H(+). Its function is as follows. Part of the ABC transporter complex NikABCDE involved in nickel import. Responsible for energy coupling to the transport system. The sequence is that of Nickel import ATP-binding protein NikD from Brucella abortus biovar 1 (strain 9-941).